Consider the following 366-residue polypeptide: MQVMRTFNQPPTSSHPTPTLNDSDTCITLYNHRGYARVLMPLFYCIVFFVGLLGNALAFHIIRPNVKKINSTTLYSANLVISDILFTLSLPLRIIYYALGFHWPLGETLCKIVGLIFYINTYAGVNFMTCLSVDRFIAVVLPLRFARFRKVSNVRYICVGVWLLVLMQTLPLLSMPMTNEEPDGFITCMEYPNFEPVPNISYILIGAVFLGYGVPVVTILVCYSILCCKLRLAAKANQLTDKSGRSQKAIGVICCVSLVFVVCFSPYHIDLLQYMIRKLIYTPDCAELTAFQISLHFTVCLMNLNSCLDPFIYFFACKGYKTKVLKILKRQVSVSFSSAARTLPEGLSRDISDGNKIHLNSTRHKE.

Over Met-1–Arg-37 the chain is Extracellular. N-linked (GlcNAc...) asparagine glycosylation occurs at Asn-21. A helical transmembrane segment spans residues Val-38–Arg-63. The Cytoplasmic portion of the chain corresponds to Pro-64–Asp-83. Residues Ile-84 to Phe-101 form a helical membrane-spanning segment. Topologically, residues His-102–Lys-111 are extracellular. The cysteines at positions 110 and 188 are disulfide-linked. A helical transmembrane segment spans residues Ile-112–Val-133. At Asp-134–Arg-155 the chain is on the cytoplasmic side. Residues Tyr-156–Ser-174 form a helical membrane-spanning segment. The Extracellular portion of the chain corresponds to Met-175 to Asn-199. A helical membrane pass occupies residues Ile-200–Cys-222. Residues Tyr-223 to Lys-248 are Cytoplasmic-facing. Residues Ala-249–Leu-272 traverse the membrane as a helical segment. The Extracellular segment spans residues Gln-273 to Gln-292. A helical membrane pass occupies residues Ile-293–Cys-317. Topologically, residues Lys-318–Glu-366 are cytoplasmic.

This sequence belongs to the G-protein coupled receptor 1 family.

The protein resides in the cell membrane. Its function is as follows. G-protein coupled receptor expressed in lymphocytes that acts as a chemotactic receptor for B-cells, T-cells, splenic dendritic cells, monocytes/macrophages and astrocytes. Receptor for oxysterol 7-alpha,25-dihydroxycholesterol (7-alpha,25-OHC) and other related oxysterols. Mediates cell positioning and movement of a number of cells by binding the 7-alpha,25-OHC ligand that forms a chemotactic gradient. Binding of 7-alpha,25-OHC mediates the correct localization of B-cells during humoral immune responses. The chain is G-protein coupled receptor 183 (gpr183) from Salmo salar (Atlantic salmon).